The primary structure comprises 84 residues: Exodeoxyribonuclease 7 small subunit (84 aa).

It belongs to the XseB family. Heterooligomer composed of large and small subunits.

Its subcellular location is the cytoplasm. The enzyme catalyses Exonucleolytic cleavage in either 5'- to 3'- or 3'- to 5'-direction to yield nucleoside 5'-phosphates.. Bidirectionally degrades single-stranded DNA into large acid-insoluble oligonucleotides, which are then degraded further into small acid-soluble oligonucleotides. The polypeptide is Exodeoxyribonuclease 7 small subunit (Herminiimonas arsenicoxydans).